The following is a 460-amino-acid chain: uncharacterized protein (460 aa).

The TRAM domain occupies 6 to 64 (PVKKNNDYEIYIDDFGNMGEGIGKIDNFTVFVKDAVKGEKVRAKIIKVNKSFAIGKLID). [4Fe-4S] cluster is bound by residues Cys-77, Cys-83, Cys-86, and Cys-166. Residues Gln-290, Tyr-319, Glu-340, and Asp-388 each contribute to the S-adenosyl-L-methionine site. Cys-415 acts as the Nucleophile in catalysis.

This sequence belongs to the class I-like SAM-binding methyltransferase superfamily. RNA M5U methyltransferase family.

This is an uncharacterized protein from Clostridium acetobutylicum (strain ATCC 824 / DSM 792 / JCM 1419 / IAM 19013 / LMG 5710 / NBRC 13948 / NRRL B-527 / VKM B-1787 / 2291 / W).